The chain runs to 449 residues: Trigger factor (449 aa).

The PPIase FKBP-type domain maps to 173–258 (GDRVTLDFVG…LKKVEWAHLP (86 aa)).

It belongs to the FKBP-type PPIase family. Tig subfamily.

The protein localises to the cytoplasm. It catalyses the reaction [protein]-peptidylproline (omega=180) = [protein]-peptidylproline (omega=0). Functionally, involved in protein export. Acts as a chaperone by maintaining the newly synthesized protein in an open conformation. Functions as a peptidyl-prolyl cis-trans isomerase. The chain is Trigger factor from Cupriavidus metallidurans (strain ATCC 43123 / DSM 2839 / NBRC 102507 / CH34) (Ralstonia metallidurans).